The sequence spans 103 residues: Large ribosomal subunit protein uL24 (103 aa).

Belongs to the universal ribosomal protein uL24 family. In terms of assembly, part of the 50S ribosomal subunit.

Its function is as follows. One of two assembly initiator proteins, it binds directly to the 5'-end of the 23S rRNA, where it nucleates assembly of the 50S subunit. Functionally, one of the proteins that surrounds the polypeptide exit tunnel on the outside of the subunit. In Vesicomyosocius okutanii subsp. Calyptogena okutanii (strain HA), this protein is Large ribosomal subunit protein uL24.